A 235-amino-acid polypeptide reads, in one-letter code: Phosphoribosylformylglycinamidine synthase subunit PurQ (235 aa).

Residues 5-235 (FGVVVFPGSN…LLNHVSIVAA (231 aa)) form the Glutamine amidotransferase type-1 domain. Cys-88 (nucleophile) is an active-site residue. Active-site residues include His-205 and Glu-207.

In terms of assembly, part of the FGAM synthase complex composed of 1 PurL, 1 PurQ and 2 PurS subunits.

The protein resides in the cytoplasm. The enzyme catalyses N(2)-formyl-N(1)-(5-phospho-beta-D-ribosyl)glycinamide + L-glutamine + ATP + H2O = 2-formamido-N(1)-(5-O-phospho-beta-D-ribosyl)acetamidine + L-glutamate + ADP + phosphate + H(+). The catalysed reaction is L-glutamine + H2O = L-glutamate + NH4(+). The protein operates within purine metabolism; IMP biosynthesis via de novo pathway; 5-amino-1-(5-phospho-D-ribosyl)imidazole from N(2)-formyl-N(1)-(5-phospho-D-ribosyl)glycinamide: step 1/2. Its function is as follows. Part of the phosphoribosylformylglycinamidine synthase complex involved in the purines biosynthetic pathway. Catalyzes the ATP-dependent conversion of formylglycinamide ribonucleotide (FGAR) and glutamine to yield formylglycinamidine ribonucleotide (FGAM) and glutamate. The FGAM synthase complex is composed of three subunits. PurQ produces an ammonia molecule by converting glutamine to glutamate. PurL transfers the ammonia molecule to FGAR to form FGAM in an ATP-dependent manner. PurS interacts with PurQ and PurL and is thought to assist in the transfer of the ammonia molecule from PurQ to PurL. In Salinibacter ruber (strain DSM 13855 / M31), this protein is Phosphoribosylformylglycinamidine synthase subunit PurQ.